We begin with the raw amino-acid sequence, 350 residues long: Transmembrane protein 185A (350 aa).

7 helical membrane passes run 16–36, 41–61, 81–101, 111–131, 177–197, 211–231, and 240–260; these read LIYA…DGII, WAVF…ASVG, FKAM…EVLV, FWLL…AACV, ILMS…VLFL, ITMA…EILL, and AFSC…LMAT. A mediates interaction with MAP1B region spans residues 298-350; it reads DLHHEDNEETEETPVPEPPKIAPMFRKKARVVITQSPGKYALPPPKLNIEMPD.

Belongs to the TMEM185 family. As to quaternary structure, interacts with MAP1B.

Its subcellular location is the cell projection. It localises to the dendrite. The protein localises to the membrane. This chain is Transmembrane protein 185A (TMEM185A), found in Pongo abelii (Sumatran orangutan).